The sequence spans 332 residues: Tetraacyldisaccharide 4'-kinase (332 aa).

60 to 67 (TVGGTGKT) lines the ATP pocket.

The protein belongs to the LpxK family.

The enzyme catalyses a lipid A disaccharide + ATP = a lipid IVA + ADP + H(+). Its pathway is glycolipid biosynthesis; lipid IV(A) biosynthesis; lipid IV(A) from (3R)-3-hydroxytetradecanoyl-[acyl-carrier-protein] and UDP-N-acetyl-alpha-D-glucosamine: step 6/6. Transfers the gamma-phosphate of ATP to the 4'-position of a tetraacyldisaccharide 1-phosphate intermediate (termed DS-1-P) to form tetraacyldisaccharide 1,4'-bis-phosphate (lipid IVA). This Pseudomonas aeruginosa (strain LESB58) protein is Tetraacyldisaccharide 4'-kinase.